We begin with the raw amino-acid sequence, 359 residues long: MTRLTLALDVMGGDFGPSVTVPAALQALNSNSQLTLLLVGDPDTITPLLAKADFEQRSRLQIIPAQSVIASDARPSQAIRASRGSSMRVALELVKEGRAEACVSAGNTGALMGLAKLLLKPLEGIERPALMTVLPHQQKGKTVVLDLGANVDCDSTMLVQFAVMGSVMAEEVIGITNPRVALLNIGEEETKGLDSIRDASALLKTVPSINYIGYLEANELLTGKTDVLVCDGFTGNVTLKTMEGVVRMFLSLLKSQGESKKRSWWLLLLKRWLQKSLTRRFSHLNPDQYNGACLLGLRGTVIKSHGAANQRAFAVAIEQAVQAVQRQVPQRIAARLESVYPAGFELLEGGKNGHSRVHN.

It belongs to the PlsX family. As to quaternary structure, homodimer. Probably interacts with PlsY.

It is found in the cytoplasm. It carries out the reaction a fatty acyl-[ACP] + phosphate = an acyl phosphate + holo-[ACP]. Its pathway is lipid metabolism; phospholipid metabolism. Functionally, catalyzes the reversible formation of acyl-phosphate (acyl-PO(4)) from acyl-[acyl-carrier-protein] (acyl-ACP). This enzyme utilizes acyl-ACP as fatty acyl donor, but not acyl-CoA. The chain is Phosphate acyltransferase from Citrobacter koseri (strain ATCC BAA-895 / CDC 4225-83 / SGSC4696).